Consider the following 394-residue polypeptide: Xylose isomerase (394 aa).

Residues His-54 and Asp-57 contribute to the active site. Mg(2+) is bound by residues Glu-181, Glu-217, His-220, Asp-245, Asp-255, Asp-257, and Asp-292.

The protein belongs to the xylose isomerase family. Homotetramer. Requires Mg(2+) as cofactor.

Its subcellular location is the cytoplasm. The enzyme catalyses alpha-D-xylose = alpha-D-xylulofuranose. The chain is Xylose isomerase (xylA) from Actinoplanes sp. (strain ATCC 31351 / 3876) (Ampullariella sp.).